We begin with the raw amino-acid sequence, 402 residues long: 1-deoxy-D-xylulose 5-phosphate reductoisomerase (402 aa).

5 residues coordinate NADPH: Thr-13, Gly-14, Ser-15, Ile-16, and Asn-126. A 1-deoxy-D-xylulose 5-phosphate-binding site is contributed by Lys-127. Residue Glu-128 coordinates NADPH. Asp-152 provides a ligand contact to Mn(2+). 4 residues coordinate 1-deoxy-D-xylulose 5-phosphate: Ser-153, Glu-154, Ser-188, and His-211. Glu-154 provides a ligand contact to Mn(2+). Gly-217 is a binding site for NADPH. Positions 224, 229, 230, and 233 each coordinate 1-deoxy-D-xylulose 5-phosphate. Glu-233 serves as a coordination point for Mn(2+).

The protein belongs to the DXR family. Mg(2+) serves as cofactor. It depends on Mn(2+) as a cofactor.

It catalyses the reaction 2-C-methyl-D-erythritol 4-phosphate + NADP(+) = 1-deoxy-D-xylulose 5-phosphate + NADPH + H(+). It participates in isoprenoid biosynthesis; isopentenyl diphosphate biosynthesis via DXP pathway; isopentenyl diphosphate from 1-deoxy-D-xylulose 5-phosphate: step 1/6. In terms of biological role, catalyzes the NADPH-dependent rearrangement and reduction of 1-deoxy-D-xylulose-5-phosphate (DXP) to 2-C-methyl-D-erythritol 4-phosphate (MEP). The polypeptide is 1-deoxy-D-xylulose 5-phosphate reductoisomerase (Psychrobacter cryohalolentis (strain ATCC BAA-1226 / DSM 17306 / VKM B-2378 / K5)).